The primary structure comprises 143 residues: Large ribosomal subunit protein uL13 (143 aa).

It belongs to the universal ribosomal protein uL13 family. As to quaternary structure, part of the 50S ribosomal subunit.

This protein is one of the early assembly proteins of the 50S ribosomal subunit, although it is not seen to bind rRNA by itself. It is important during the early stages of 50S assembly. This Albidiferax ferrireducens (strain ATCC BAA-621 / DSM 15236 / T118) (Rhodoferax ferrireducens) protein is Large ribosomal subunit protein uL13.